We begin with the raw amino-acid sequence, 197 residues long: Holliday junction branch migration complex subunit RuvA (197 aa).

Residues 1–63 (MYDYIKGNLT…EDAHLLYGFH (63 aa)) are domain I. The interval 64–142 (TEDEKAVFLN…DINEVSTDKS (79 aa)) is domain II. The segment at 143–147 (KVSTI) is flexible linker. Residues 148–197 (NNNQELEEAVEALLALGYKTNELKKIEKFFEGTTDTAENYIKSALKMLMK) are domain III.

This sequence belongs to the RuvA family. In terms of assembly, homotetramer. Forms an RuvA(8)-RuvB(12)-Holliday junction (HJ) complex. HJ DNA is sandwiched between 2 RuvA tetramers; dsDNA enters through RuvA and exits via RuvB. An RuvB hexamer assembles on each DNA strand where it exits the tetramer. Each RuvB hexamer is contacted by two RuvA subunits (via domain III) on 2 adjacent RuvB subunits; this complex drives branch migration. In the full resolvosome a probable DNA-RuvA(4)-RuvB(12)-RuvC(2) complex forms which resolves the HJ.

It is found in the cytoplasm. In terms of biological role, the RuvA-RuvB-RuvC complex processes Holliday junction (HJ) DNA during genetic recombination and DNA repair, while the RuvA-RuvB complex plays an important role in the rescue of blocked DNA replication forks via replication fork reversal (RFR). RuvA specifically binds to HJ cruciform DNA, conferring on it an open structure. The RuvB hexamer acts as an ATP-dependent pump, pulling dsDNA into and through the RuvAB complex. HJ branch migration allows RuvC to scan DNA until it finds its consensus sequence, where it cleaves and resolves the cruciform DNA. This is Holliday junction branch migration complex subunit RuvA from Streptococcus mutans serotype c (strain ATCC 700610 / UA159).